A 672-amino-acid polypeptide reads, in one-letter code: Glycerophosphocholine phosphodiesterase GPCPD1 (672 aa).

Positions 1–113 constitute a CBM20 domain; it reads MTPSQVTFEI…IIIDDGQFGI (113 aa). Substrate-binding positions include Arg68 and 86-87; that span reads HK. Phosphoserine is present on Ser175. The region spanning 318–618 is the GP-PDE domain; the sequence is PLDVGHRGAG…DRIYDWMPEQ (301 aa). Tyr608 carries the phosphotyrosine modification.

The protein belongs to the glycerophosphoryl diester phosphodiesterase family.

The protein resides in the cytoplasm. The protein localises to the cytosol. The catalysed reaction is sn-glycerol 3-phosphocholine + H2O = sn-glycerol 3-phosphate + choline + H(+). Functionally, may be involved in the negative regulation of skeletal muscle differentiation, independently of its glycerophosphocholine phosphodiesterase activity. In Rattus norvegicus (Rat), this protein is Glycerophosphocholine phosphodiesterase GPCPD1 (Gpcpd1).